Reading from the N-terminus, the 115-residue chain is Large ribosomal subunit protein bL20c (115 aa).

It belongs to the bacterial ribosomal protein bL20 family.

Its subcellular location is the plastid. It localises to the chloroplast. Binds directly to 23S ribosomal RNA and is necessary for the in vitro assembly process of the 50S ribosomal subunit. It is not involved in the protein synthesizing functions of that subunit. The sequence is that of Large ribosomal subunit protein bL20c from Chaetosphaeridium globosum (Charophycean green alga).